Consider the following 468-residue polypeptide: 55 kDa erythrocyte membrane protein (468 aa).

Positions 73-154 constitute a PDZ domain; the sequence is LVQFEKVTEE…MVSIKVIPNQ (82 aa). The 71-residue stretch at 160–230 folds into the SH3 domain; the sequence is ALQMFMRAQF…PSPELQEWRV (71 aa). The region spanning 284-453 is the Guanylate kinase-like domain; that stretch reads RKTLVLIGAS…SLKLLEEAFE (170 aa).

The protein belongs to the MAGUK family.

The protein localises to the membrane. Its subcellular location is the cell projection. The protein resides in the stereocilium. Its function is as follows. May play a role in the regulation of neutrophil polarization. This Gallus gallus (Chicken) protein is 55 kDa erythrocyte membrane protein (MPP1).